A 397-amino-acid chain; its full sequence is Izumo sperm-egg fusion protein 1 (397 aa).

Residues 1-21 form the signal peptide; sequence MGPHFTLLLAALANCLCPGRP. 5 disulfides stabilise this stretch: C22–C149, C25–C152, C135–C159, C139–C165, and C182–C233. Over 22 to 319 the chain is Extracellular; that stretch reads CIKCDQFVTD…QNPEKKMKTR (298 aa). The interval 148–160 is important for interaction with IZUMO1R; that stretch reads WCLKCEKQLHICR. The Ig-like C2-type domain occupies 167-251; sequence ERHIEVHRSE…HATVIRYDVT (85 aa). Residue N204 is glycosylated (N-linked (GlcNAc...) asparagine). The interval 271–292 is disordered; that stretch reads EHETPVHVTPQTPPGQEPESEL. A helical transmembrane segment spans residues 320 to 340; the sequence is LLILLTLGFVVLVASIIISVL. The Cytoplasmic segment spans residues 341-397; the sequence is HFRKVSAKLKNASDEVKPTASGSKSDQSLSQQMGLKKASQADFNSDYSGDKSEATEN. The disordered stretch occupies residues 351 to 397; sequence NASDEVKPTASGSKSDQSLSQQMGLKKASQADFNSDYSGDKSEATEN. A compositionally biased stretch (polar residues) spans 360 to 373; it reads ASGSKSDQSLSQQM. S379 bears the Phosphoserine mark. Residues 388-397 show a composition bias toward basic and acidic residues; sequence SGDKSEATEN.

Belongs to the Izumo family. As to quaternary structure, monomer, homodimer; disulfide-linked and homooligomer; depending on the context. Interacts with IZUMO1R/JUNO. IZUMO1 and IZUMO1R/JUNO form a complex with 1:1 stoichiometry. In gamete recognition, IZUMO1R/JUNO first binds to monomeric IZUMO1. The weak, but specific interaction with IZUMO1R/JUNO induces IZUMO1 homodimerization. The process follows a tight binding phase where IZUMO1 bends the entire structure towards the sperm membrane side through a thiol-disulfide exchange reaction. The molecule no longer binds to IZUMO1R/JUNO and instead binds to a putative second oocyte receptor. Interacts with ACE3. Part of a oolemmal binding multimeric complex (IZUMO1 complex) composed at least of IZUMO1 and GLIPR1L1; the complex assemblage is influenced by the maturation status of the male germ cell. Interacts with GLIPR1L1. Interacts with FREY; the interaction retains IZUMO1 at the endoplasmic reticulum membrane and coordinates IZUMO1 complex assembly. Interacts with WDR54. Forms a complex with SPACA6 and TMEM81 on spermatocyte cell membrane. In terms of processing, N-glycosylated. Glycosylation is not essential for fusion and for proper protein trafficking in sperm. Phosphorylated. The cytoplasmic C-terminus is phosphorylated and undergoes phosphorylation changes during epididymal transit. Sperm-specific (at protein level). Detectable on sperm surface only after the acrosome reaction. Expressed in spermatozoa, more abundantly expressed in the head than the tail (at protein level).

It localises to the cell membrane. Its subcellular location is the cytoplasmic vesicle. The protein localises to the secretory vesicle. It is found in the acrosome membrane. Its function is as follows. Essential sperm cell-surface protein required for fertilization by acting as a ligand for IZUMO1R/JUNO receptor on egg. The IZUMO1:IZUMO1R/JUNO interaction is a necessary adhesion event between sperm and egg that is required for fertilization but is not sufficient for cell fusion. The ligand-receptor interaction probably does not act as a membrane 'fusogen'. Plays a critical role in sperm-oolemma binding prior to plasma membrane fusion. Can mediate cell-cell fusion in cultured mammalian cells independently of its binding to IZUMO1R/JUNO. The protein is Izumo sperm-egg fusion protein 1 of Mus musculus (Mouse).